The following is a 248-amino-acid chain: PF03932 family protein CutC (248 aa).

This sequence belongs to the CutC family.

The protein localises to the cytoplasm. The sequence is that of PF03932 family protein CutC from Photorhabdus laumondii subsp. laumondii (strain DSM 15139 / CIP 105565 / TT01) (Photorhabdus luminescens subsp. laumondii).